The primary structure comprises 191 residues: Photosystem I assembly protein Ycf4 (191 aa).

2 helical membrane passes run 34–54 (VASMLSIGGVGFLLASFSSYF) and 68–88 (IFVPQGLVMGLYGVAAFLLAI).

The protein belongs to the Ycf4 family.

It localises to the cellular thylakoid membrane. Seems to be required for the assembly of the photosystem I complex. This is Photosystem I assembly protein Ycf4 from Prochlorococcus marinus (strain NATL2A).